Here is a 640-residue protein sequence, read N- to C-terminus: Protein cereblon (640 aa).

The span at 1-11 (MDDEETAEIDE) shows a compositional bias: acidic residues. Disordered stretches follow at residues 1 to 25 (MDDEETAEIDETNSAAADMQVELGP) and 92 to 159 (REDP…EAVP). The segment covering 113–137 (QPAQQEEQASLPYDSPSRASISSRH) has biased composition (low complexity). Residues 278–506 (RMLIFMHQHI…IIDTTLKQES (229 aa)) enclose the Lon N-terminal domain. Residues 505-614 (ESLFYCRYCN…LAGSSVRIGK (110 aa)) enclose the CULT domain. The Zn(2+) site is built by C510, C513, C579, and C582.

This sequence belongs to the CRBN family. Likely a component of a DCX (DDB1-CUL4-X-box) protein ligase complex. May interact with pic/DDB1. Ubiquitinated.

Its subcellular location is the nucleus. It functions in the pathway protein modification; protein ubiquitination. Its function is as follows. Substrate recognition component of a DCX (DDB1-CUL4-X-box) E3 protein ligase complex that mediates the ubiquitination and subsequent proteasomal degradation of target proteins. Has an essential role in mediating growth by negatively regulating insulin signaling. It also has a role in maintaining presynaptic function in the neuromuscular junction synapses of third-instar larvae. This chain is Protein cereblon, found in Drosophila virilis (Fruit fly).